A 447-amino-acid chain; its full sequence is UDP-glycosyltransferase 79B10 (447 aa).

UDP-alpha-D-glucose is bound by residues S260, 319 to 321, 336 to 344, and 358 to 361; these read VQQ, HCGFGSMWE, and LADQ.

This sequence belongs to the UDP-glycosyltransferase family.

The polypeptide is UDP-glycosyltransferase 79B10 (UGT79B10) (Arabidopsis thaliana (Mouse-ear cress)).